A 156-amino-acid polypeptide reads, in one-letter code: Putative thymidylate kinase (156 aa).

7-14 contributes to the ATP binding site; the sequence is GLDGTGKT.

The protein belongs to the thymidylate kinase family.

It catalyses the reaction dTMP + ATP = dTDP + ADP. Its pathway is pyrimidine metabolism; dTTP biosynthesis. Catalyzes the conversion of dTMP to dTDP. This is Putative thymidylate kinase from Acidianus convivator (ABV).